Reading from the N-terminus, the 275-residue chain is Formamidopyrimidine-DNA glycosylase (275 aa).

Residue Pro2 is the Schiff-base intermediate with DNA of the active site. The active-site Proton donor is Glu3. Lys58 acts as the Proton donor; for beta-elimination activity in catalysis. The DNA site is built by His91, Arg109, and Arg154. An FPG-type zinc finger spans residues 240 to 274 (AVYERAGLPCRVCGTPIRRLVQGQRATYYCPSCQK). Catalysis depends on Arg264, which acts as the Proton donor; for delta-elimination activity.

The protein belongs to the FPG family. In terms of assembly, monomer. Zn(2+) serves as cofactor.

The catalysed reaction is Hydrolysis of DNA containing ring-opened 7-methylguanine residues, releasing 2,6-diamino-4-hydroxy-5-(N-methyl)formamidopyrimidine.. It catalyses the reaction 2'-deoxyribonucleotide-(2'-deoxyribose 5'-phosphate)-2'-deoxyribonucleotide-DNA = a 3'-end 2'-deoxyribonucleotide-(2,3-dehydro-2,3-deoxyribose 5'-phosphate)-DNA + a 5'-end 5'-phospho-2'-deoxyribonucleoside-DNA + H(+). In terms of biological role, involved in base excision repair of DNA damaged by oxidation or by mutagenic agents. Acts as a DNA glycosylase that recognizes and removes damaged bases. Has a preference for oxidized purines, such as 7,8-dihydro-8-oxoguanine (8-oxoG). Has AP (apurinic/apyrimidinic) lyase activity and introduces nicks in the DNA strand. Cleaves the DNA backbone by beta-delta elimination to generate a single-strand break at the site of the removed base with both 3'- and 5'-phosphates. The chain is Formamidopyrimidine-DNA glycosylase from Bordetella petrii (strain ATCC BAA-461 / DSM 12804 / CCUG 43448).